The following is a 598-amino-acid chain: MIIALDTYLVLNSVIAGYQFLKDSYQFYDSGALLLTAVSLLLSYHVCAFLFNQYKQVWTYTGLGELIVLLKGITLSAAVTGVIQYAVYHTMFFRLLTACWVLQLLSIGGTRILSRVLNESIRKKRCASSRALIIGAGSGGTLMVRQLLSKDEPDIIPVAFIDDDQTKHKLEIMGLPVIGGKESIMPAVQKLKINYIIIAIPSLRTHELQVLYKECVRTGVSIKIMPHFDEMLLGTRTAGQIRDVKAEDLLGRKPVTLDTSEISNRIKGKTVLVTGAGGSIGSEICRQISAFQPKEIILLGHGENSIHSIYTELNGRFGKHIVFHTEIADVQDRDKMFTLMKKYEPHVVYHAAAHKHVPLMEHNPEEAVKNNIIGTKNVAEAADMSGTETFVLISSDKAVNPANVMGATKRFAEMIIMNLGKVSRTKFVAVRFGNVLGSRGSVIPIFKKQIEKGGPVTVTHPAMTRYFMTIPEASRLVIQAGALAKGRQIFVLDMGEPVKIVDLAKNLIHLSGYTTEQVPIEFTGIRPGEKMYEELLNKNEVHAEQIFPKIHIGKAVDGDWPVLMRFIEDFHELPEADLRARLFAAINTSEEMTAASVH.

A run of 4 helical transmembrane segments spans residues methionine 1–leucine 21, glycine 31–phenylalanine 51, leucine 63–isoleucine 83, and valine 87–isoleucine 107.

This sequence belongs to the polysaccharide synthase family.

It localises to the cell membrane. Its function is as follows. Involved in biofilm formation. The protein is Probable polysaccharide biosynthesis protein EpsC (epsC) of Bacillus subtilis (strain 168).